Here is a 313-residue protein sequence, read N- to C-terminus: Sideroflexin-4 (313 aa).

A run of 5 helical transmembrane segments spans residues 87–107, 141–161, 175–191, 230–247, and 269–289; these read AALL…VKSL, LLLG…PRLL, FIPV…NVIA, VVLF…AYFF, and VLVM…IGRI.

It belongs to the sideroflexin family.

It is found in the mitochondrion inner membrane. In terms of biological role, mitochondrial amino-acid transporter. Does not act as a serine transporter: not able to mediate transport of serine into mitochondria. The protein is Sideroflexin-4 of Bos taurus (Bovine).